The chain runs to 340 residues: Biotin synthase (340 aa).

Residues 56–283 enclose the Radical SAM core domain; it reads NAVQLSTLLS…KAVVRLSAGR (228 aa). Cysteine 71, cysteine 75, and cysteine 78 together coordinate [4Fe-4S] cluster. [2Fe-2S] cluster is bound by residues cysteine 115, cysteine 146, cysteine 206, and arginine 278.

It belongs to the radical SAM superfamily. Biotin synthase family. Homodimer. [4Fe-4S] cluster serves as cofactor. The cofactor is [2Fe-2S] cluster.

It catalyses the reaction (4R,5S)-dethiobiotin + (sulfur carrier)-SH + 2 reduced [2Fe-2S]-[ferredoxin] + 2 S-adenosyl-L-methionine = (sulfur carrier)-H + biotin + 2 5'-deoxyadenosine + 2 L-methionine + 2 oxidized [2Fe-2S]-[ferredoxin]. Its pathway is cofactor biosynthesis; biotin biosynthesis; biotin from 7,8-diaminononanoate: step 2/2. Its function is as follows. Catalyzes the conversion of dethiobiotin (DTB) to biotin by the insertion of a sulfur atom into dethiobiotin via a radical-based mechanism. The polypeptide is Biotin synthase (Burkholderia lata (strain ATCC 17760 / DSM 23089 / LMG 22485 / NCIMB 9086 / R18194 / 383)).